The following is a 468-amino-acid chain: Keratin, type I cytoskeletal 26 (468 aa).

The interval 1-82 (MSFRLSGGSR…GNEHSLLSGN (82 aa)) is head. The interval 83–118 (EKVTMQNLNDRLASYLDHVHALEEANADLEQKIKGW) is coil 1A. The 316-residue stretch at 83-398 (EKVTMQNLND…NLLDGEERKS (316 aa)) folds into the IF rod domain. Positions 119-140 (YEKCEPGSSREHDHDYSRYFSV) are linker 1. The interval 141 to 232 (IEDLKRQIIS…KSHEEEMEVL (92 aa)) is coil 1B. Residues 233 to 255 (QYTAGGNVNVEMNATPGVDLTVL) are linker 12. The coil 2 stretch occupies residues 256–394 (LNNMRAEYED…DIYCNLLDGE (139 aa)). Residues 395-465 (ERKSKSTCYK…NITVEQRVPS (71 aa)) form a tail region.

It belongs to the intermediate filament family. Heterotetramer of two type I and two type II keratins. Strongly expressed in skin and scalp, and weak expression observed in thymus and tongue. In the hair follicle, expression is restricted to the mid- to upper inner root sheath cuticle, being present slightly above the apex of the dermal papilla (at protein level).

This chain is Keratin, type I cytoskeletal 26, found in Homo sapiens (Human).